Consider the following 442-residue polypeptide: MAAQASEELEKLKLNGQNGHAQEQVSAADEAADNDDSEDDEKEEEGGAEGAATGAAKKKKKRKPKKKKKGGAKKQSSPPRVPISELFPNNQYPEGEIVEYKDENNYRTTNEEKRYLDRMNNDFLQEYRHGAEVHRQVRQYAQKNIKPGQTLTEIAEGIEDAVRALTGHQGLEEGDNIKGGMGFPCGLSINHCAAHYTPNAGNKMVLQQGDVMKVDFGAHINGRIVDSAFTMTFDPVYDNLLAAVKDATNTGIREAGIDVRMSDIGAAIQEAMESYEVEINGTTYPVKAIRNLNGHNIEQHIIHGGKSVPIVKGGDQTKMEEGEVFAIETFGSTGKGYVRDDMETSHYAKVSNAPSVSLRLSSAKNLLNVINKNFGTLPFCRRYLDRLGQDKYLLGLNNLVSAGIIQDYPPLCDIKGSYTAQYEHTIVLRPTVKEIISRGDDY.

The interval 1-92 (MAAQASEELE…ISELFPNNQY (92 aa)) is disordered. Over residues 15-25 (NGQNGHAQEQV) the composition is skewed to polar residues. Over residues 30–47 (EAADNDDSEDDEKEEEGG) the composition is skewed to acidic residues. Residues 56-72 (AKKKKKRKPKKKKKGGA) show a composition bias toward basic residues. Residue histidine 195 coordinates substrate. Residues aspartate 215, aspartate 226, and histidine 295 each coordinate a divalent metal cation. Position 303 (histidine 303) interacts with substrate. Residues glutamate 328 and glutamate 423 each coordinate a divalent metal cation.

This sequence belongs to the peptidase M24A family. Methionine aminopeptidase eukaryotic type 2 subfamily. The cofactor is Co(2+). It depends on Zn(2+) as a cofactor. Mn(2+) is required as a cofactor. Requires Fe(2+) as cofactor.

Its subcellular location is the cytoplasm. It carries out the reaction Release of N-terminal amino acids, preferentially methionine, from peptides and arylamides.. Functionally, cotranslationally removes the N-terminal methionine from nascent proteins. The N-terminal methionine is often cleaved when the second residue in the primary sequence is small and uncharged (Met-Ala-, Cys, Gly, Pro, Ser, Thr, or Val). This is Methionine aminopeptidase 2-1 from Talaromyces marneffei (strain ATCC 18224 / CBS 334.59 / QM 7333) (Penicillium marneffei).